A 215-amino-acid chain; its full sequence is 3-isopropylmalate dehydratase small subunit (215 aa).

Belongs to the LeuD family. LeuD type 1 subfamily. Heterodimer of LeuC and LeuD.

The enzyme catalyses (2R,3S)-3-isopropylmalate = (2S)-2-isopropylmalate. Its pathway is amino-acid biosynthesis; L-leucine biosynthesis; L-leucine from 3-methyl-2-oxobutanoate: step 2/4. Its function is as follows. Catalyzes the isomerization between 2-isopropylmalate and 3-isopropylmalate, via the formation of 2-isopropylmaleate. In Stutzerimonas stutzeri (strain A1501) (Pseudomonas stutzeri), this protein is 3-isopropylmalate dehydratase small subunit.